We begin with the raw amino-acid sequence, 398 residues long: Acetate kinase (398 aa).

Asn-9 provides a ligand contact to Mg(2+). Position 16 (Lys-16) interacts with ATP. Arg-93 lines the substrate pocket. Asp-150 acts as the Proton donor/acceptor in catalysis. ATP-binding positions include 209–213 (HLGAG), 284–286 (DMR), and 329–333 (GIGEH). Mg(2+) is bound at residue Glu-382.

This sequence belongs to the acetokinase family. As to quaternary structure, homodimer. Mg(2+) serves as cofactor. The cofactor is Mn(2+).

The protein localises to the cytoplasm. It carries out the reaction acetate + ATP = acetyl phosphate + ADP. It participates in metabolic intermediate biosynthesis; acetyl-CoA biosynthesis; acetyl-CoA from acetate: step 1/2. In terms of biological role, catalyzes the formation of acetyl phosphate from acetate and ATP. Can also catalyze the reverse reaction. The chain is Acetate kinase from Rhodopseudomonas palustris (strain TIE-1).